Consider the following 145-residue polypeptide: Large ribosomal subunit protein bL9 (145 aa).

Belongs to the bacterial ribosomal protein bL9 family.

In terms of biological role, binds to the 23S rRNA. The protein is Large ribosomal subunit protein bL9 of Mesomycoplasma hyopneumoniae (strain J / ATCC 25934 / NCTC 10110) (Mycoplasma hyopneumoniae).